A 341-amino-acid chain; its full sequence is UDP-glucose 4-epimerase (341 aa).

Belongs to the polysaccharide synthase family.

The catalysed reaction is UDP-alpha-D-glucose = UDP-alpha-D-galactose. Its function is as follows. Epimerizes UDP-galactose to UDP-glucose. The sequence is that of UDP-glucose 4-epimerase (capD) from Rickettsia canadensis (strain McKiel).